A 211-amino-acid chain; its full sequence is GATA transcription factor 19 (211 aa).

The GATA-type zinc-finger motif lies at 77–102 (CANCDTTSTPLWRNGPRGPKSLCNAC). Residues 111-131 (RRASTARNSTSGGGSTAAGVP) are disordered.

Belongs to the type IV zinc-finger family. Class B subfamily. In terms of assembly, forms heterodimers with GATA18.

The protein localises to the nucleus. Transcriptional regulator that specifically binds 5'-GATA-3' or 5'-GAT-3' motifs within gene promoters. Regulates both flower and shoot apical meristem (SAM) development, especially for establishing organ boundaries in shoots and flowers, probably by controlling the number and position of WUS-expressing cells. The sequence is that of GATA transcription factor 19 from Arabidopsis thaliana (Mouse-ear cress).